We begin with the raw amino-acid sequence, 216 residues long: Thymidine kinase (216 aa).

Residues 9 to 16 (GTMDCGKS) and 86 to 89 (DEAQ) contribute to the ATP site. The active-site Proton acceptor is glutamate 87.

Belongs to the thymidine kinase family. In terms of assembly, homotetramer.

Its subcellular location is the cytoplasm. The enzyme catalyses thymidine + ATP = dTMP + ADP + H(+). The polypeptide is Thymidine kinase (Streptomyces avermitilis (strain ATCC 31267 / DSM 46492 / JCM 5070 / NBRC 14893 / NCIMB 12804 / NRRL 8165 / MA-4680)).